The chain runs to 236 residues: Demethylmenaquinone methyltransferase (236 aa).

Residues threonine 62, aspartate 80, 107-108, and serine 124 contribute to the S-adenosyl-L-methionine site; that span reads DA.

This sequence belongs to the class I-like SAM-binding methyltransferase superfamily. MenG/UbiE family.

It catalyses the reaction a 2-demethylmenaquinol + S-adenosyl-L-methionine = a menaquinol + S-adenosyl-L-homocysteine + H(+). It functions in the pathway quinol/quinone metabolism; menaquinone biosynthesis; menaquinol from 1,4-dihydroxy-2-naphthoate: step 2/2. In terms of biological role, methyltransferase required for the conversion of demethylmenaquinol (DMKH2) to menaquinol (MKH2). The protein is Demethylmenaquinone methyltransferase of Thermobifida fusca (strain YX).